The sequence spans 287 residues: MSTYTTRSIGAPNTLDYKVYIEKDGKPVSAFHDIPLYANAEKTILNMIVEVPRWTNAKMEISKDLALNPIIQDTKKGKLRFVRNCFPHHGYIHNYGAFPQTWEDPNHVHPETKAKGDNDPLDVCEIGETVGYTGQVKQVKVLGVMALLDEGETDWKIIAIDVKDPLASKVNDIEDVERHLPGLLRATNEWFRIYKIPDGKPENQFAFSGECKNKKYADEVIRECEEAWETLIAGKASDDKGISLENTTLENTPTFTASASIPEGQNLAPAPIDQSIDKWFYISGASV.

A diphosphate-binding site is contributed by Arg80. Mg(2+) is bound by residues Asp117, Asp122, and Asp154.

The protein belongs to the PPase family. It depends on Mg(2+) as a cofactor.

Its subcellular location is the cytoplasm. It catalyses the reaction diphosphate + H2O = 2 phosphate + H(+). This Yarrowia lipolytica (strain CLIB 122 / E 150) (Yeast) protein is Inorganic pyrophosphatase (IPP1).